Consider the following 364-residue polypeptide: Uroporphyrinogen decarboxylase (364 aa).

Substrate contacts are provided by residues arginine 28–arginine 32, aspartate 78, tyrosine 160, threonine 215, and histidine 333.

The protein belongs to the uroporphyrinogen decarboxylase family. In terms of assembly, homodimer.

The protein resides in the cytoplasm. The enzyme catalyses uroporphyrinogen III + 4 H(+) = coproporphyrinogen III + 4 CO2. Its pathway is porphyrin-containing compound metabolism; protoporphyrin-IX biosynthesis; coproporphyrinogen-III from 5-aminolevulinate: step 4/4. Functionally, catalyzes the decarboxylation of four acetate groups of uroporphyrinogen-III to yield coproporphyrinogen-III. This chain is Uroporphyrinogen decarboxylase, found in Burkholderia pseudomallei (strain 1106a).